The primary structure comprises 67 residues: Large ribosomal subunit protein bL35 (67 aa).

A compositionally biased stretch (basic residues) spans 1–16 (MPKMKTKSSAKKRFRV). Residues 1–24 (MPKMKTKSSAKKRFRVRPGGTVKR) are disordered.

This sequence belongs to the bacterial ribosomal protein bL35 family.

This Delftia acidovorans (strain DSM 14801 / SPH-1) protein is Large ribosomal subunit protein bL35.